The sequence spans 622 residues: FERM domain-containing protein 6 (622 aa).

In terms of domain architecture, FERM spans 16–328; the sequence is RSVCIFLPND…NSHRLYMNLQ (313 aa). A disordered region spans residues 364 to 445; sequence KRSRASGSSA…SGVESGGKDR (82 aa). Composition is skewed to low complexity over residues 384-395 and 425-438; these read HSTASHSSSHTS and SSMT…TSGV. Ser-522 carries the phosphoserine modification. Position 523 is a phosphothreonine (Thr-523). Residues Ser-525, Ser-542, and Ser-544 each carry the phosphoserine modification.

The protein resides in the cytoplasm. It is found in the cell membrane. This chain is FERM domain-containing protein 6 (FRMD6), found in Homo sapiens (Human).